The chain runs to 84 residues: Small ribosomal subunit protein bS16 (84 aa).

The protein belongs to the bacterial ribosomal protein bS16 family.

The protein is Small ribosomal subunit protein bS16 of Methylococcus capsulatus (strain ATCC 33009 / NCIMB 11132 / Bath).